Consider the following 238-residue polypeptide: Ubiquinone biosynthesis O-methyltransferase (238 aa).

R40, G59, D81, and M126 together coordinate S-adenosyl-L-methionine.

The protein belongs to the methyltransferase superfamily. UbiG/COQ3 family.

It carries out the reaction a 3-demethylubiquinol + S-adenosyl-L-methionine = a ubiquinol + S-adenosyl-L-homocysteine + H(+). The catalysed reaction is a 3-(all-trans-polyprenyl)benzene-1,2-diol + S-adenosyl-L-methionine = a 2-methoxy-6-(all-trans-polyprenyl)phenol + S-adenosyl-L-homocysteine + H(+). It participates in cofactor biosynthesis; ubiquinone biosynthesis. Its function is as follows. O-methyltransferase that catalyzes the 2 O-methylation steps in the ubiquinone biosynthetic pathway. The sequence is that of Ubiquinone biosynthesis O-methyltransferase from Neisseria meningitidis serogroup A / serotype 4A (strain DSM 15465 / Z2491).